A 154-amino-acid chain; its full sequence is UPF0178 protein in pahZ1 5'region (154 aa).

This sequence belongs to the UPF0178 family.

The polypeptide is UPF0178 protein in pahZ1 5'region (Paucimonas lemoignei (Pseudomonas lemoignei)).